We begin with the raw amino-acid sequence, 50 residues long: uncharacterized protein (50 aa).

Residues 5–19 (IIIIVIVIIIFFFYL) traverse the membrane as a helical segment. A coiled-coil region spans residues 19–50 (LKQKKLTNCETQVVKVQKDIDEINLKLKKLNK).

The protein resides in the membrane. This is an uncharacterized protein from Acheta domesticus (House cricket).